A 145-amino-acid chain; its full sequence is D-aminoacyl-tRNA deacylase (145 aa).

A Gly-cisPro motif, important for rejection of L-amino acids motif is present at residues 137 to 138 (GP).

Belongs to the DTD family. In terms of assembly, homodimer.

Its subcellular location is the cytoplasm. The catalysed reaction is glycyl-tRNA(Ala) + H2O = tRNA(Ala) + glycine + H(+). It carries out the reaction a D-aminoacyl-tRNA + H2O = a tRNA + a D-alpha-amino acid + H(+). Functionally, an aminoacyl-tRNA editing enzyme that deacylates mischarged D-aminoacyl-tRNAs. Also deacylates mischarged glycyl-tRNA(Ala), protecting cells against glycine mischarging by AlaRS. Acts via tRNA-based rather than protein-based catalysis; rejects L-amino acids rather than detecting D-amino acids in the active site. By recycling D-aminoacyl-tRNA to D-amino acids and free tRNA molecules, this enzyme counteracts the toxicity associated with the formation of D-aminoacyl-tRNA entities in vivo and helps enforce protein L-homochirality. This chain is D-aminoacyl-tRNA deacylase, found in Cereibacter sphaeroides (strain KD131 / KCTC 12085) (Rhodobacter sphaeroides).